Here is a 361-residue protein sequence, read N- to C-terminus: Serpentine receptor class epsilon-32 (361 aa).

A run of 7 helical transmembrane segments spans residues 34–54 (IIELVFYISCFHLMTISLYVM), 66–86 (ILYIPMFCVWYGLIAGKLITI), 124–144 (LLIFGGFVQWHYMYTVVYGIL), 168–188 (IPIALTIITQFLAISTSLSVL), 195–215 (FLSHLPWIISCSLGALAYLFI), 256–276 (LVFVVFFYVAFVSFGMFALAF), and 286–306 (FVENFLFLNPYPICFTAMLTI).

The protein belongs to the nematode receptor-like protein sre family.

It localises to the membrane. This chain is Serpentine receptor class epsilon-32 (sre-32), found in Caenorhabditis elegans.